The following is a 180-amino-acid chain: Vacuolar ATPase assembly protein VMA22 (180 aa).

Positions 4-38 form a coiled coil; the sequence is QALREELDSKCLQLLSDLEELEAKRAALNARVEEG. The interval 90–113 is disordered; sequence TPEEVGPSEASLRRRKGPTKTKEL.

Accessory component of the multisubunit proton-transporting vacuolar (V)-ATPase protein pump. As to expression, predominantly expressed in the heart, liver, kidney and testis and at lower levels in the brain and lung. Undetectable in the spleen and muscles.

The protein resides in the endosome. The protein localises to the lysosome. It localises to the endoplasmic reticulum-Golgi intermediate compartment. It is found in the cytoplasmic vesicle. Its subcellular location is the COPI-coated vesicle. The protein resides in the endoplasmic reticulum. Accessory component of the proton-transporting vacuolar (V)-ATPase protein pump involved in intracellular iron homeostasis. In aerobic conditions, required for intracellular iron homeostasis, thus triggering the activity of Fe(2+) prolyl hydroxylase (PHD) enzymes, and leading to HIF1A hydroxylation and subsequent proteasomal degradation. Necessary for endolysosomal acidification and lysosomal degradation. May be involved in Golgi homeostasis. This is Vacuolar ATPase assembly protein VMA22 (Vma22) from Mus musculus (Mouse).